The following is an 88-amino-acid chain: Small ribosomal subunit protein uS15 (88 aa).

It belongs to the universal ribosomal protein uS15 family. Part of the 30S ribosomal subunit. Forms a bridge to the 50S subunit in the 70S ribosome, contacting the 23S rRNA.

Its function is as follows. One of the primary rRNA binding proteins, it binds directly to 16S rRNA where it helps nucleate assembly of the platform of the 30S subunit by binding and bridging several RNA helices of the 16S rRNA. Functionally, forms an intersubunit bridge (bridge B4) with the 23S rRNA of the 50S subunit in the ribosome. The sequence is that of Small ribosomal subunit protein uS15 from Variovorax paradoxus (strain S110).